The following is a 236-amino-acid chain: Probable sulfate/thiosulfate import ATP-binding protein CysA (236 aa).

One can recognise an ABC transporter domain in the interval 3–233; sequence ILIENISKRF…PTNTFVTNFL (231 aa). Residue 35 to 42 coordinates ATP; the sequence is GPSGSGKS.

It belongs to the ABC transporter superfamily. Sulfate/tungstate importer (TC 3.A.1.6) family.

It localises to the plastid. Its subcellular location is the chloroplast. It carries out the reaction sulfate(out) + ATP + H2O = sulfate(in) + ADP + phosphate + H(+). It catalyses the reaction thiosulfate(out) + ATP + H2O = thiosulfate(in) + ADP + phosphate + H(+). Its function is as follows. Part of the ABC transporter complex involved in sulfate/thiosulfate import. Responsible for energy coupling to the transport system. The chain is Probable sulfate/thiosulfate import ATP-binding protein CysA from Chlorella vulgaris (Green alga).